We begin with the raw amino-acid sequence, 342 residues long: RNA 3'-terminal phosphate cyclase (342 aa).

It belongs to the RNA 3'-terminal cyclase family. Type 1 subfamily.

Its subcellular location is the cytoplasm. The catalysed reaction is a 3'-end 3'-phospho-ribonucleotide-RNA + GTP = a 3'-end 2',3'-cyclophospho-ribonucleotide-RNA + GMP + diphosphate. Inhibited by GMP. Functionally, catalyzes the GTP-dependent conversion of 3'-phosphate to a 2',3'-cyclic phosphodiester at the end of RNA. The biological role of this enzyme is unknown but it is likely to function in some aspects of cellular RNA processing. This is RNA 3'-terminal phosphate cyclase from Pyrococcus furiosus (strain ATCC 43587 / DSM 3638 / JCM 8422 / Vc1).